A 417-amino-acid chain; its full sequence is Dihydrolipoyllysine-residue succinyltransferase component of 2-oxoglutarate dehydrogenase complex (417 aa).

Residues 1-76 (MAEIKVPELA…QVGEIIGTIS (76 aa)) enclose the Lipoyl-binding domain. Position 42 is an N6-lipoyllysine (Lys-42). Positions 75-191 (ISEGAGESSA…SFDKPVEVQK (117 aa)) are disordered. Basic and acidic residues-rich tracts occupy residues 89 to 103 (EKTESKESVKEEKQA) and 152 to 163 (RKQDVEAYEKPA). The region spanning 123–160 (IASPSARKLAREKGIDLSQVPTGDPLGRVRKQDVEAYE) is the Peripheral subunit-binding (PSBD) domain. Residues 164–182 (SKPAPQQKQQPQAQKAQQS) are compositionally biased toward low complexity. Active-site residues include His-388 and Asp-392.

The protein belongs to the 2-oxoacid dehydrogenase family. As to quaternary structure, forms a 24-polypeptide structural core with octahedral symmetry. Part of the 2-oxoglutarate dehydrogenase (OGDH) complex composed of E1 (2-oxoglutarate dehydrogenase), E2 (dihydrolipoamide succinyltransferase) and E3 (dihydrolipoamide dehydrogenase); the complex contains multiple copies of the three enzymatic components (E1, E2 and E3). (R)-lipoate serves as cofactor.

It carries out the reaction N(6)-[(R)-dihydrolipoyl]-L-lysyl-[protein] + succinyl-CoA = N(6)-[(R)-S(8)-succinyldihydrolipoyl]-L-lysyl-[protein] + CoA. The protein operates within amino-acid degradation; L-lysine degradation via saccharopine pathway; glutaryl-CoA from L-lysine: step 6/6. E2 component of the 2-oxoglutarate dehydrogenase (OGDH) complex which catalyzes the second step in the conversion of 2-oxoglutarate to succinyl-CoA and CO(2). The protein is Dihydrolipoyllysine-residue succinyltransferase component of 2-oxoglutarate dehydrogenase complex (odhB) of Bacillus subtilis (strain 168).